We begin with the raw amino-acid sequence, 205 residues long: Cytochrome c oxidase subunit 3 (205 aa).

Transmembrane regions (helical) follow at residues 28–48 (GTIV…AMYF), 72–92 (ALVI…GVFA), 104–124 (WFSL…YEYF), 142–162 (FFIT…AFVV), and 184–204 (SYYW…IYFI).

Belongs to the cytochrome c oxidase subunit 3 family. As to quaternary structure, associates with subunits I, II and IV to form cytochrome c oxidase.

The protein localises to the cell membrane. The catalysed reaction is 4 Fe(II)-[cytochrome c] + O2 + 8 H(+)(in) = 4 Fe(III)-[cytochrome c] + 2 H2O + 4 H(+)(out). The polypeptide is Cytochrome c oxidase subunit 3 (ctaE) (Corynebacterium diphtheriae (strain ATCC 700971 / NCTC 13129 / Biotype gravis)).